We begin with the raw amino-acid sequence, 194 residues long: ATP synthase subunit b 1 (194 aa).

The chain crosses the membrane as a helical span at residues 1-21; the sequence is MLLGTVVTVLSTLPAIAYAMD.

Belongs to the ATPase B chain family. As to quaternary structure, F-type ATPases have 2 components, F(1) - the catalytic core - and F(0) - the membrane proton channel. F(1) has five subunits: alpha(3), beta(3), gamma(1), delta(1), epsilon(1). F(0) has three main subunits: a(1), b(2) and c(10-14). The alpha and beta chains form an alternating ring which encloses part of the gamma chain. F(1) is attached to F(0) by a central stalk formed by the gamma and epsilon chains, while a peripheral stalk is formed by the delta and b chains.

It localises to the cell inner membrane. In terms of biological role, f(1)F(0) ATP synthase produces ATP from ADP in the presence of a proton or sodium gradient. F-type ATPases consist of two structural domains, F(1) containing the extramembraneous catalytic core and F(0) containing the membrane proton channel, linked together by a central stalk and a peripheral stalk. During catalysis, ATP synthesis in the catalytic domain of F(1) is coupled via a rotary mechanism of the central stalk subunits to proton translocation. Component of the F(0) channel, it forms part of the peripheral stalk, linking F(1) to F(0). The sequence is that of ATP synthase subunit b 1 from Granulibacter bethesdensis (strain ATCC BAA-1260 / CGDNIH1).